Consider the following 278-residue polypeptide: Pantothenate synthetase (278 aa).

30 to 37 lines the ATP pocket; sequence MGGLHQGH. His37 acts as the Proton donor in catalysis. (R)-pantoate is bound at residue Gln61. Gln61 serves as a coordination point for beta-alanine. 146–149 contributes to the ATP binding site; that stretch reads GQKD. Gln152 contacts (R)-pantoate. ATP is bound by residues Ile175 and 183–186; that span reads MSTR.

It belongs to the pantothenate synthetase family. Homodimer.

It is found in the cytoplasm. The catalysed reaction is (R)-pantoate + beta-alanine + ATP = (R)-pantothenate + AMP + diphosphate + H(+). The protein operates within cofactor biosynthesis; (R)-pantothenate biosynthesis; (R)-pantothenate from (R)-pantoate and beta-alanine: step 1/1. Catalyzes the condensation of pantoate with beta-alanine in an ATP-dependent reaction via a pantoyl-adenylate intermediate. The sequence is that of Pantothenate synthetase from Ruthia magnifica subsp. Calyptogena magnifica.